We begin with the raw amino-acid sequence, 376 residues long: MTAYGGEMTKERRKITVGLLFGGRSAEHEVSRASAANILRALNSDRYDVYLIGISRDGRWFACDSGNGAGTGSTALTISDEAPEIGLVPGGRGRLVHCDGPTGSDAGSIDVAFPILHGPNGEDGTVQGALELADVSFVGSSVTGSAVAMDKEVSKRLMRDAGLPVVPFLTTTASSRIEYAAAVAALGTPDLFVKPANLGSSVGVSRARSEEEFAASCALAFRYDRKILVEQALNGAREIECSVLEESTGDIRASGLGEIVRASEHGFYSYQAKYIDADGAALHIPADLPLLQARRLQELAVEVFNVLCCEGMARVDFFVQGDEVFVNEANTLPGFTSSSMYPKLWEASGLSQTDLMDKLIAHAFARHERRRALSFG.

An ATP-grasp domain is found at 155-361 (KRLMRDAGLP…QTDLMDKLIA (207 aa)). Residue 184–239 (AALGTPDLFVKPANLGSSVGVSRARSEEEFAASCALAFRYDRKILVEQALNGAREI) participates in ATP binding. Mg(2+) contacts are provided by aspartate 316, glutamate 328, and asparagine 330.

The protein belongs to the D-alanine--D-alanine ligase family. It depends on Mg(2+) as a cofactor. The cofactor is Mn(2+).

The protein localises to the cytoplasm. It carries out the reaction 2 D-alanine + ATP = D-alanyl-D-alanine + ADP + phosphate + H(+). The protein operates within cell wall biogenesis; peptidoglycan biosynthesis. Functionally, cell wall formation. This chain is D-alanine--D-alanine ligase B, found in Bradyrhizobium diazoefficiens (strain JCM 10833 / BCRC 13528 / IAM 13628 / NBRC 14792 / USDA 110).